The sequence spans 208 residues: FMN-dependent NADH:quinone oxidoreductase 2 (208 aa).

17 to 19 (SVS) contributes to the FMN binding site.

This sequence belongs to the azoreductase type 1 family. Homodimer. It depends on FMN as a cofactor.

It catalyses the reaction 2 a quinone + NADH + H(+) = 2 a 1,4-benzosemiquinone + NAD(+). It carries out the reaction N,N-dimethyl-1,4-phenylenediamine + anthranilate + 2 NAD(+) = 2-(4-dimethylaminophenyl)diazenylbenzoate + 2 NADH + 2 H(+). Quinone reductase that provides resistance to thiol-specific stress caused by electrophilic quinones. Its function is as follows. Also exhibits azoreductase activity. Catalyzes the reductive cleavage of the azo bond in aromatic azo compounds to the corresponding amines. The protein is FMN-dependent NADH:quinone oxidoreductase 2 of Halalkalibacterium halodurans (strain ATCC BAA-125 / DSM 18197 / FERM 7344 / JCM 9153 / C-125) (Bacillus halodurans).